A 271-amino-acid polypeptide reads, in one-letter code: MRNDVHLGHKARKRFGQNFLNDPYIIDGIVSAINPKPGQNLVEIGPGLGAITEPVGREVDKFTVIELDRDLAERLRNHPELASKLTIHEGDAMRFDFKQLVKPNNKLRVFGNLPYNISTPLMFHLFEFHRDIQDMHFMLQKEVVNRLAAGPGTKAYGRLTVMAQYYCKVVPVLEVPPSAFVPPPKVDSAVVRLVPYEDLPHPATSLEWLDRVVREGFNQRRKTVRNCYKGLAEPETLETLGINPGMRPENLTLAQFVALANWLDATHKTHA.

S-adenosyl-L-methionine-binding residues include N18, L20, G45, E66, D91, and N112.

This sequence belongs to the class I-like SAM-binding methyltransferase superfamily. rRNA adenine N(6)-methyltransferase family. RsmA subfamily.

The protein localises to the cytoplasm. The enzyme catalyses adenosine(1518)/adenosine(1519) in 16S rRNA + 4 S-adenosyl-L-methionine = N(6)-dimethyladenosine(1518)/N(6)-dimethyladenosine(1519) in 16S rRNA + 4 S-adenosyl-L-homocysteine + 4 H(+). Functionally, specifically dimethylates two adjacent adenosines (A1518 and A1519) in the loop of a conserved hairpin near the 3'-end of 16S rRNA in the 30S particle. May play a critical role in biogenesis of 30S subunits. The polypeptide is Ribosomal RNA small subunit methyltransferase A (Vibrio cholerae serotype O1 (strain ATCC 39315 / El Tor Inaba N16961)).